The following is a 91-amino-acid chain: Small ribosomal subunit protein uS7 (91 aa).

Belongs to the universal ribosomal protein uS7 family. In terms of assembly, part of the 30S ribosomal subunit. Contacts proteins S9 and S11.

One of the primary rRNA binding proteins, it binds directly to 16S rRNA where it nucleates assembly of the head domain of the 30S subunit. Is located at the subunit interface close to the decoding center, probably blocks exit of the E-site tRNA. In Apple proliferation phytoplasma, this protein is Small ribosomal subunit protein uS7 (rpsG).